A 352-amino-acid polypeptide reads, in one-letter code: Nicotinate-nucleotide--dimethylbenzimidazole phosphoribosyltransferase (352 aa).

The active-site Proton acceptor is E316.

This sequence belongs to the CobT family.

The catalysed reaction is 5,6-dimethylbenzimidazole + nicotinate beta-D-ribonucleotide = alpha-ribazole 5'-phosphate + nicotinate + H(+). It functions in the pathway nucleoside biosynthesis; alpha-ribazole biosynthesis; alpha-ribazole from 5,6-dimethylbenzimidazole: step 1/2. Catalyzes the synthesis of alpha-ribazole-5'-phosphate from nicotinate mononucleotide (NAMN) and 5,6-dimethylbenzimidazole (DMB). The protein is Nicotinate-nucleotide--dimethylbenzimidazole phosphoribosyltransferase of Clostridium acetobutylicum (strain ATCC 824 / DSM 792 / JCM 1419 / IAM 19013 / LMG 5710 / NBRC 13948 / NRRL B-527 / VKM B-1787 / 2291 / W).